Consider the following 1061-residue polypeptide: Transcription termination factor 2 (1061 aa).

2 disordered regions span residues 1–163 (MSSE…TAEA) and 212–253 (ILSS…VKTS). A compositionally biased stretch (low complexity) spans 32–46 (LSKSSRLSKSSRPSS). S108 and S110 each carry phosphoserine. Residues 138-152 (LSDDDSEIEYSDEVQ) show a composition bias toward acidic residues. 2 positions are modified to phosphoserine: S214 and S215. T216 carries the phosphothreonine modification. The segment covering 237 to 253 (KSLSPRSSAGASVVKTS) has biased composition (polar residues). Residues 452–652 (WRERKLPRGG…YALLKFLRCS (201 aa)) enclose the Helicase ATP-binding domain. ATP is bound at residue 465–472 (DDMGLGKT). Residues 485 to 523 (GQEMSEGKDESSDSDSEDDKNKKRKSVTGWKSKGRKDTR) form a disordered region. The segment covering 506-522 (KKRKSVTGWKSKGRKDT) has biased composition (basic residues). The short motif at 603–606 (DEAH) is the DEAH box element. A Helicase C-terminal domain is found at 891 to 1056 (KINMVIQILK…SSKLTIDDLK (166 aa)).

It belongs to the SNF2/RAD54 helicase family.

The protein localises to the nucleus. DsDNA-dependent ATPase which acts as a transcription termination factor by coupling ATP hydrolysis with removal of RNA polymerase II from the DNA template. The protein is Transcription termination factor 2 (lds) of Drosophila melanogaster (Fruit fly).